Reading from the N-terminus, the 139-residue chain is Peptide methionine sulfoxide reductase B4 (139 aa).

The residue at position 2 (Ala-2) is an N-acetylalanine. In terms of domain architecture, MsrB spans 12–133 (EEEWRAVLSP…NSVSINFNPA (122 aa)). Residues Cys-51, Cys-54, Cys-97, and Cys-100 each coordinate Zn(2+). Cys-69 and Cys-122 form a disulfide bridge. Catalysis depends on Cys-122, which acts as the Nucleophile.

Belongs to the MsrB Met sulfoxide reductase family. Zn(2+) serves as cofactor.

The protein resides in the cytoplasm. Its subcellular location is the cytosol. The enzyme catalyses L-methionyl-[protein] + [thioredoxin]-disulfide + H2O = L-methionyl-(R)-S-oxide-[protein] + [thioredoxin]-dithiol. Catalyzes the reduction of methionine sulfoxide (MetSO) to methionine in proteins. Plays a protective role against oxidative stress by restoring activity to proteins that have been inactivated by methionine oxidation. MSRB family specifically reduces the MetSO R-enantiomer. This chain is Peptide methionine sulfoxide reductase B4 (MSRB4), found in Arabidopsis thaliana (Mouse-ear cress).